Reading from the N-terminus, the 425-residue chain is tRNA(Ile)-lysidine synthase (425 aa).

Residue S37–S42 coordinates ATP.

The protein belongs to the tRNA(Ile)-lysidine synthase family.

It localises to the cytoplasm. The enzyme catalyses cytidine(34) in tRNA(Ile2) + L-lysine + ATP = lysidine(34) in tRNA(Ile2) + AMP + diphosphate + H(+). Functionally, ligates lysine onto the cytidine present at position 34 of the AUA codon-specific tRNA(Ile) that contains the anticodon CAU, in an ATP-dependent manner. Cytidine is converted to lysidine, thus changing the amino acid specificity of the tRNA from methionine to isoleucine. The polypeptide is tRNA(Ile)-lysidine synthase (Leptospira borgpetersenii serovar Hardjo-bovis (strain JB197)).